The primary structure comprises 259 residues: Probable kinetochore protein spc25 (259 aa).

Positions 1–20 (MSRKSVMSSTFEPSLSTSRQ) are enriched in polar residues. A disordered region spans residues 1–25 (MSRKSVMSSTFEPSLSTSRQPLGPS). Positions 59-162 (RKRVLEERNQ…HAAQLEAQAR (104 aa)) form a coiled coil.

Belongs to the SPC25 family. As to quaternary structure, component of the NDC80 complex, which consists of kpr-1/ndc80, kpr-2/nuf2, kpr-3/spc24 and kpr-4/spc25.

Its subcellular location is the nucleus. It localises to the chromosome. The protein resides in the centromere. The protein localises to the kinetochore. Functionally, acts as a component of the essential kinetochore-associated NDC80 complex, which is required for chromosome segregation and spindle checkpoint activity. This is Probable kinetochore protein spc25 (kpr-4) from Neurospora crassa (strain ATCC 24698 / 74-OR23-1A / CBS 708.71 / DSM 1257 / FGSC 987).